We begin with the raw amino-acid sequence, 514 residues long: Threonine synthase (514 aa).

K124 is subject to N6-(pyridoxal phosphate)lysine. Residues G277, N278, F279, D281, and T449 each coordinate pyridoxal 5'-phosphate. S467 carries the post-translational modification Phosphoserine.

This sequence belongs to the threonine synthase family. Requires pyridoxal 5'-phosphate as cofactor.

It carries out the reaction O-phospho-L-homoserine + H2O = L-threonine + phosphate. It participates in amino-acid biosynthesis; L-threonine biosynthesis; L-threonine from L-aspartate: step 5/5. Catalyzes the gamma-elimination of phosphate from L-phosphohomoserine and the beta-addition of water to produce L-threonine. In Saccharomyces cerevisiae (strain ATCC 204508 / S288c) (Baker's yeast), this protein is Threonine synthase (THR4).